The primary structure comprises 355 residues: MEKEESTNKNNENIQSENEINKIDNKSNTENPTIKCIFKKPNKQRNIRKRSDDLILNTSNNADEEDEDGNEEKDKKKLKSKINQYTTKQDKKNEFSYDSSGNAGSSINSAELSSTQYMNEEEEFKKEVVLSSSRNNNNNNNNNNNNNNDNISNSEGSGGSDNNDDGIYRGMKSYSTFVEKKSDLTYKGGGVKAGPMKTSTTFKLSNRIDHQPDVCKDYKQTGQCTFGDACKFLHDRSDYKSGWQIDKEYEEEQKQKRLNNINGIKNNNNDNKNNDDDKEQQQFPFACFICKKQYVDPVQTKCKHFFCEDCALTHNRKNKKCALCGEPTLGTFITPPKKILDQLMEISKSHFKNQS.

The disordered stretch occupies residues 1–167 (MEKEESTNKN…GGSDNNDDGI (167 aa)). A compositionally biased stretch (low complexity) spans 8-18 (NKNNENIQSEN). Positions 37–48 (IFKKPNKQRNIR) are enriched in basic residues. Acidic residues predominate over residues 62-71 (ADEEDEDGNE). Composition is skewed to low complexity over residues 99–110 (SSGNAGSSINSA) and 131–155 (SSSR…SNSE). The C3H1-type zinc-finger motif lies at 214-237 (VCKDYKQTGQCTFGDACKFLHDRS). The disordered stretch occupies residues 258–277 (LNNINGIKNNNNDNKNNDDD). Over residues 259-271 (NNINGIKNNNNDN) the composition is skewed to low complexity. Residues 287–325 (CFICKKQYVDPVQTKCKHFFCEDCALTHNRKNKKCALCG) form an RING-type zinc finger.

This Dictyostelium discoideum (Social amoeba) protein is RING finger protein 113 homolog (rnf113).